Consider the following 1344-residue polypeptide: Regulatory-associated protein of TOR 1 (1344 aa).

Residues 28-44 (CVSSHDDGDSRRKDSEA) are compositionally biased toward basic and acidic residues. Disordered stretches follow at residues 28–56 (CVSS…GTTE) and 771–818 (ASTD…DSVS). A compositionally biased stretch (low complexity) spans 785–816 (SSSPLGSSGLMQGSPLSDDSSLHSDSGMMHDS). WD repeat units lie at residues 1025-1064 (RFET…LLNG), 1070-1111 (FPDK…GKQK), 1125-1164 (GARD…LVRS), 1168-1208 (ESEC…PLVC), 1214-1255 (QKVE…DTYL), 1259-1298 (AHRG…LGII), and 1307-1344 (QKIG…SQAR).

This sequence belongs to the WD repeat RAPTOR family. In terms of assembly, interacts with TOR, ATPK1 and ML1. Interacts with KIN10. Post-translationally, phosphorylated by KIN10. In terms of tissue distribution, expressed in roots, leaves, flowers and seeds.

It localises to the cytoplasm. Functionally, probable component of the plant TOR kinase pathway that recruits substrates for TOR. Modulates plant cell growth and regulates the activity of ATPK1 kinase in response to osmotic stress. The sequence is that of Regulatory-associated protein of TOR 1 (RAPTOR1) from Arabidopsis thaliana (Mouse-ear cress).